We begin with the raw amino-acid sequence, 317 residues long: Iron-uptake system-binding protein (317 aa).

An N-terminal signal peptide occupies residues 1–19 (MKKISLTLLILLLALTAAA). Cys-20 carries the N-palmitoyl cysteine lipid modification. Cys-20 is lipidated: S-diacylglycerol cysteine. The region spanning 57-317 (IAITGSVESM…KAAAEKLTQN (261 aa)) is the Fe/B12 periplasmic-binding domain.

The protein belongs to the bacterial solute-binding protein 8 family. In terms of assembly, the complex is composed of one ATP-binding protein (YusV), two transmembrane proteins (FeuB and FeuC) and a solute-binding protein (FeuA).

It is found in the cell membrane. It localises to the cytoplasm. The protein resides in the membrane raft. Functionally, involved in the uptake of iron. Part of the ABC transporter complex FeuABC/YusV involved in import of the catecholate siderophores bacillibactin and enterobactin. The polypeptide is Iron-uptake system-binding protein (feuA) (Bacillus subtilis (strain 168)).